A 435-amino-acid chain; its full sequence is Enolase (435 aa).

Glutamine 167 serves as a coordination point for (2R)-2-phosphoglycerate. The active-site Proton donor is the glutamate 209. Mg(2+) contacts are provided by aspartate 246, glutamate 292, and aspartate 319. 4 residues coordinate (2R)-2-phosphoglycerate: lysine 344, arginine 373, serine 374, and lysine 395. The active-site Proton acceptor is lysine 344.

Belongs to the enolase family. The cofactor is Mg(2+).

The protein localises to the cytoplasm. Its subcellular location is the secreted. It localises to the cell surface. The catalysed reaction is (2R)-2-phosphoglycerate = phosphoenolpyruvate + H2O. It participates in carbohydrate degradation; glycolysis; pyruvate from D-glyceraldehyde 3-phosphate: step 4/5. Functionally, catalyzes the reversible conversion of 2-phosphoglycerate (2-PG) into phosphoenolpyruvate (PEP). It is essential for the degradation of carbohydrates via glycolysis. This Lachnospira eligens (strain ATCC 27750 / DSM 3376 / VPI C15-48 / C15-B4) (Eubacterium eligens) protein is Enolase.